A 320-amino-acid polypeptide reads, in one-letter code: Cytochrome f (320 aa).

An N-terminal signal peptide occupies residues 1-35 (MQTRNAFSYIKEEITRSISVLLVIYIIIRAPISNA). Heme-binding residues include Tyr-36, Cys-56, Cys-59, and His-60. A helical transmembrane segment spans residues 286-305 (VQGLLFFLASIIFAQIFLVL).

This sequence belongs to the cytochrome f family. As to quaternary structure, the 4 large subunits of the cytochrome b6-f complex are cytochrome b6, subunit IV (17 kDa polypeptide, petD), cytochrome f and the Rieske protein, while the 4 small subunits are PetG, PetL, PetM and PetN. The complex functions as a dimer. It depends on heme as a cofactor.

The protein resides in the plastid. The protein localises to the chloroplast thylakoid membrane. In terms of biological role, component of the cytochrome b6-f complex, which mediates electron transfer between photosystem II (PSII) and photosystem I (PSI), cyclic electron flow around PSI, and state transitions. This chain is Cytochrome f, found in Lotus japonicus (Lotus corniculatus var. japonicus).